The following is a 795-amino-acid chain: Glycerol-3-phosphate acyltransferase 2, mitochondrial (795 aa).

A disordered region spans residues 1 to 21; that stretch reads MATMLEGRCQTQPRSSPSGRE. Residues 1 to 305 are Cytoplasmic-facing; it reads MATMLEGRCQ…LGPRLSALGQ (305 aa). Residues 9–18 show a composition bias toward polar residues; it reads CQTQPRSSPS. Residues 180–331 form an acyltransferase region; sequence QLHKGQMKMV…DALLVPVAVT (152 aa). The short motif at 205 to 210 is the HXXXXD motif element; the sequence is HKTLLD. The helical transmembrane segment at 306–332 threads the bilayer; it reads AWVGFVVQAVQVGIVPDALLVPVAVTY. The Mitochondrial intermembrane segment spans residues 333 to 449; the sequence is DLVPDAPCDI…QLLVRRLSCH (117 aa). Residues 450-472 form a helical membrane-spanning segment; the sequence is VLSASVGSSAVMSTAIMATLLLF. The Cytoplasmic segment spans residues 473-795; sequence KHQKLLGEFS…EQFIRQFICS (323 aa). Residue Ser-656 is modified to Phosphoserine. Thr-660 bears the Phosphothreonine mark. Phosphoserine occurs at positions 662 and 664.

Belongs to the GPAT/DAPAT family. As to quaternary structure, interacts with PIWIL2.

The protein localises to the mitochondrion outer membrane. It carries out the reaction sn-glycerol 3-phosphate + an acyl-CoA = a 1-acyl-sn-glycero-3-phosphate + CoA. The catalysed reaction is a 1-acyl-sn-glycero-3-phosphate + an acyl-CoA = a 1,2-diacyl-sn-glycero-3-phosphate + CoA. It catalyses the reaction 1-(9Z-octadecenoyl)-sn-glycero-3-phosphate + (9Z)-octadecenoyl-CoA = 1,2-di-(9Z-octadecenoyl)-sn-glycero-3-phosphate + CoA. The enzyme catalyses 1-(9Z-octadecenoyl)-sn-glycero-3-phosphate + (5Z,8Z,11Z,14Z)-eicosatetraenoyl-CoA = 1-(9Z)-octadecenoyl-2-(5Z,8Z,11Z,14Z)-eicosatetraenoyl-sn-glycero-3-phosphate + CoA. It carries out the reaction (5Z,8Z,11Z,14Z)-eicosatetraenoyl-CoA + sn-glycerol 3-phosphate = 1-(5Z,8Z,11Z,14Z-eicosatetraenoyl)-sn-glycero-3-phosphate + CoA. The protein operates within phospholipid metabolism; CDP-diacylglycerol biosynthesis; CDP-diacylglycerol from sn-glycerol 3-phosphate: step 1/3. With respect to regulation, inhibited by N-ethylmaleimide (NEM). Functionally, transfers an acyl-group from acyl-ACP to the sn-1 position of glycerol-3-phosphate producing a lysophosphatidic acid (LPA), an essential step for the triacylglycerol (TAG) and glycerophospholipids. In vitro also transfers an acyl-group from acyl-ACP to the LPA producing a phosphatidic acid (PA). Prefers arachidonoyl-CoA as the acyl donor. Required for primary processing step during piRNA biosynthesis. Molecular mechanisms by which it promotes piRNA biosynthesis are unclear and do not involve its acyltransferase activity. The sequence is that of Glycerol-3-phosphate acyltransferase 2, mitochondrial from Homo sapiens (Human).